A 216-amino-acid chain; its full sequence is Adenylate kinase (216 aa).

ATP is bound at residue 10–15 (GAGKGT). Positions 30–59 (STGDIFRANIKEKTPLGIEAKRYIDNGQLV) are NMP. AMP is bound by residues Thr31, Arg36, 57–59 (QLV), 85–88 (GFPR), and Gln92. The tract at residues 126-163 (GRRVCTSCGASYHIRFNPPKIEGKCDICDNELIQRKDD) is LID. Arg127 contributes to the ATP binding site. 2 residues coordinate Zn(2+): Cys130 and Cys133. An ATP-binding site is contributed by 136-137 (SY). Residues Cys150 and Cys153 each contribute to the Zn(2+) site. Arg160 and Arg171 together coordinate AMP. Glu199 is a binding site for ATP.

Belongs to the adenylate kinase family. Monomer.

It is found in the cytoplasm. It carries out the reaction AMP + ATP = 2 ADP. It functions in the pathway purine metabolism; AMP biosynthesis via salvage pathway; AMP from ADP: step 1/1. Functionally, catalyzes the reversible transfer of the terminal phosphate group between ATP and AMP. Plays an important role in cellular energy homeostasis and in adenine nucleotide metabolism. The polypeptide is Adenylate kinase (Clostridium botulinum (strain 657 / Type Ba4)).